We begin with the raw amino-acid sequence, 116 residues long: Large ribosomal subunit protein uL18 (116 aa).

It belongs to the universal ribosomal protein uL18 family. In terms of assembly, part of the 50S ribosomal subunit; part of the 5S rRNA/L5/L18/L25 subcomplex. Contacts the 5S and 23S rRNAs.

Its function is as follows. This is one of the proteins that bind and probably mediate the attachment of the 5S RNA into the large ribosomal subunit, where it forms part of the central protuberance. In Shewanella amazonensis (strain ATCC BAA-1098 / SB2B), this protein is Large ribosomal subunit protein uL18.